Reading from the N-terminus, the 216-residue chain is Adenylate kinase (216 aa).

11–16 (GSGKGT) lines the ATP pocket. Residues 31 to 60 (ATGDLFRKAIECGDELGDTVKSYMERGELV) are NMP. AMP is bound by residues Thr-32, Arg-37, 58–60 (ELV), 86–89 (GFPR), and Gln-93. Residues 127-163 (GRWVCRSCQSPYQSGCAEVTKGKCSRCQGGLYQRPDD) form an LID region. Arg-128 provides a ligand contact to ATP. Cys-131, Cys-134, Cys-150, and Cys-153 together coordinate Zn(2+). The AMP site is built by Arg-160 and Arg-171. ATP is bound at residue Ala-199.

This sequence belongs to the adenylate kinase family. As to quaternary structure, monomer.

It localises to the cytoplasm. It catalyses the reaction AMP + ATP = 2 ADP. The protein operates within purine metabolism; AMP biosynthesis via salvage pathway; AMP from ADP: step 1/1. In terms of biological role, catalyzes the reversible transfer of the terminal phosphate group between ATP and AMP. Plays an important role in cellular energy homeostasis and in adenine nucleotide metabolism. The protein is Adenylate kinase of Dehalococcoides mccartyi (strain CBDB1).